Here is a 432-residue protein sequence, read N- to C-terminus: Trigger factor (432 aa).

Positions 161–246 (DDRVTIDFVG…LKKIENMVLP (86 aa)) constitute a PPIase FKBP-type domain.

The protein belongs to the FKBP-type PPIase family. Tig subfamily.

It localises to the cytoplasm. The catalysed reaction is [protein]-peptidylproline (omega=180) = [protein]-peptidylproline (omega=0). Functionally, involved in protein export. Acts as a chaperone by maintaining the newly synthesized protein in an open conformation. Functions as a peptidyl-prolyl cis-trans isomerase. The chain is Trigger factor from Haemophilus influenzae (strain 86-028NP).